Reading from the N-terminus, the 579-residue chain is Golvesin (579 aa).

The interval 1-75 (MTSVNEHSLL…NNNNNNNNNN (75 aa)) is required for targeting to the plasma membrane. The disordered stretch occupies residues 1–79 (MTSVNEHSLL…NNNNNNSNTG (79 aa)). The Lumenal portion of the chain corresponds to 1–94 (MTSVNEHSLL…KKKKWNFRKK (94 aa)). Residues 11–77 (INNNENNDNN…NNNNNNNNSN (67 aa)) show a composition bias toward low complexity. Residues 95 to 115 (ILPMIVILIITAIVVCLVVFS) form a helical; Signal-anchor for type III membrane protein membrane-spanning segment. Residues 95–118 (ILPMIVILIITAIVVCLVVFSLPF) are required for membrane targeting. Over 116–578 (LPFDSSNTIY…SNDFVIAESP (463 aa)) the chain is Cytoplasmic. The interval 559-579 (WPSSKGIPGFSNDFVIAESPE) is required for transfer to endosomes and contractile vacuoles; the protein is trapped in the Golgi.

The protein resides in the contractile vacuole membrane. The protein localises to the endosome membrane. It is found in the golgi apparatus membrane. This chain is Golvesin (gol), found in Dictyostelium discoideum (Social amoeba).